The chain runs to 312 residues: Ribosomal RNA small subunit methyltransferase H (312 aa).

S-adenosyl-L-methionine-binding positions include 34–36 (GGH), aspartate 54, leucine 83, aspartate 99, and glutamine 106.

It belongs to the methyltransferase superfamily. RsmH family.

It is found in the cytoplasm. The enzyme catalyses cytidine(1402) in 16S rRNA + S-adenosyl-L-methionine = N(4)-methylcytidine(1402) in 16S rRNA + S-adenosyl-L-homocysteine + H(+). Its function is as follows. Specifically methylates the N4 position of cytidine in position 1402 (C1402) of 16S rRNA. The polypeptide is Ribosomal RNA small subunit methyltransferase H (Rubrobacter xylanophilus (strain DSM 9941 / JCM 11954 / NBRC 16129 / PRD-1)).